Consider the following 443-residue polypeptide: Ribulose bisphosphate carboxylase large chain (443 aa).

Substrate contacts are provided by N89 and T139. K141 (proton acceptor) is an active-site residue. K143 contacts substrate. K167, D169, and E170 together coordinate Mg(2+). K167 carries the N6-carboxylysine modification. H260 functions as the Proton acceptor in the catalytic mechanism. Substrate-binding residues include R261, H293, and S345.

It belongs to the RuBisCO large chain family. Type I subfamily. Heterohexadecamer of 8 large chains and 8 small chains; disulfide-linked. The disulfide link is formed within the large subunit homodimers. It depends on Mg(2+) as a cofactor. The disulfide bond which can form in the large chain dimeric partners within the hexadecamer appears to be associated with oxidative stress and protein turnover.

The protein resides in the plastid. It localises to the chloroplast. It carries out the reaction 2 (2R)-3-phosphoglycerate + 2 H(+) = D-ribulose 1,5-bisphosphate + CO2 + H2O. It catalyses the reaction D-ribulose 1,5-bisphosphate + O2 = 2-phosphoglycolate + (2R)-3-phosphoglycerate + 2 H(+). In terms of biological role, ruBisCO catalyzes two reactions: the carboxylation of D-ribulose 1,5-bisphosphate, the primary event in carbon dioxide fixation, as well as the oxidative fragmentation of the pentose substrate in the photorespiration process. Both reactions occur simultaneously and in competition at the same active site. In Antirrhinum majus (Garden snapdragon), this protein is Ribulose bisphosphate carboxylase large chain.